Consider the following 674-residue polypeptide: U-box domain-containing protein 16 (674 aa).

Positions 273-347 (NIPADFRCPI…VLWCRDQKIP (75 aa)) constitute a U-box domain. 3 ARM repeats span residues 399 to 438 (TVAR…NLSI), 441 to 481 (QNKT…SLAG), and 484 to 523 (AYRR…NLVA).

The catalysed reaction is S-ubiquitinyl-[E2 ubiquitin-conjugating enzyme]-L-cysteine + [acceptor protein]-L-lysine = [E2 ubiquitin-conjugating enzyme]-L-cysteine + N(6)-ubiquitinyl-[acceptor protein]-L-lysine.. It participates in protein modification; protein ubiquitination. Functions as an E3 ubiquitin ligase. In Arabidopsis thaliana (Mouse-ear cress), this protein is U-box domain-containing protein 16 (PUB16).